A 315-amino-acid polypeptide reads, in one-letter code: Ribosomal RNA small subunit methyltransferase H (315 aa).

S-adenosyl-L-methionine-binding positions include 37–39 (GGH), Asp57, Phe83, Asp105, and Gln112.

This sequence belongs to the methyltransferase superfamily. RsmH family.

It localises to the cytoplasm. The catalysed reaction is cytidine(1402) in 16S rRNA + S-adenosyl-L-methionine = N(4)-methylcytidine(1402) in 16S rRNA + S-adenosyl-L-homocysteine + H(+). Its function is as follows. Specifically methylates the N4 position of cytidine in position 1402 (C1402) of 16S rRNA. In Pseudomonas entomophila (strain L48), this protein is Ribosomal RNA small subunit methyltransferase H.